Here is a 645-residue protein sequence, read N- to C-terminus: Aspartate--tRNA ligase, mitochondrial (645 aa).

Residues 1–47 (MYFPSWLSQLYRGLSRPIRRTTQPIWGSLYRSLLQSSQRRIPEFSSF) constitute a mitochondrion transit peptide. A Phosphothreonine modification is found at Thr219. A Phosphoserine modification is found at Ser242. The aspartate stretch occupies residues 244–247 (QQFK). An L-aspartate-binding site is contributed by Arg266. 266-268 (RDE) serves as a coordination point for ATP. An N6-acetyllysine modification is found at Lys382. Glu535 serves as a coordination point for ATP. Residue Arg542 participates in L-aspartate binding. 584–587 (GLDR) is an ATP binding site.

Belongs to the class-II aminoacyl-tRNA synthetase family. Type 1 subfamily. Homodimer.

It is found in the mitochondrion matrix. It localises to the mitochondrion membrane. It catalyses the reaction tRNA(Asp) + L-aspartate + ATP = L-aspartyl-tRNA(Asp) + AMP + diphosphate. Functionally, catalyzes the attachment of aspartate to tRNA(Asp) in a two-step reaction: aspartate is first activated by ATP to form Asp-AMP and then transferred to the acceptor end of tRNA(Asp). In Homo sapiens (Human), this protein is Aspartate--tRNA ligase, mitochondrial (DARS2).